A 152-amino-acid chain; its full sequence is MSKKVAALGLDVGRKRIGVAGCDGTGLIATGITTIVRSSYDQDIAQIKQLVEERNVNLLVVGLPYTMAGEIGSQAKQVQKFARRVAEQLHLPLEYMDERLSSVEAENQLKARKRFSSYDKGLIDQQAAEIILQQWLDLRRSHLQEGGDNLHR.

The protein belongs to the YqgF nuclease family.

It localises to the cytoplasm. In terms of biological role, could be a nuclease involved in processing of the 5'-end of pre-16S rRNA. The protein is Putative pre-16S rRNA nuclease of Synechocystis sp. (strain ATCC 27184 / PCC 6803 / Kazusa).